Reading from the N-terminus, the 426-residue chain is Serine--tRNA ligase (426 aa).

233-235 is a binding site for L-serine; the sequence is TSE. 264 to 266 contributes to the ATP binding site; the sequence is RSE. Glutamate 287 lines the L-serine pocket. 351–354 is an ATP binding site; the sequence is EISS. Serine 387 serves as a coordination point for L-serine.

Belongs to the class-II aminoacyl-tRNA synthetase family. Type-1 seryl-tRNA synthetase subfamily. In terms of assembly, homodimer. The tRNA molecule binds across the dimer.

Its subcellular location is the cytoplasm. The catalysed reaction is tRNA(Ser) + L-serine + ATP = L-seryl-tRNA(Ser) + AMP + diphosphate + H(+). It catalyses the reaction tRNA(Sec) + L-serine + ATP = L-seryl-tRNA(Sec) + AMP + diphosphate + H(+). The protein operates within aminoacyl-tRNA biosynthesis; selenocysteinyl-tRNA(Sec) biosynthesis; L-seryl-tRNA(Sec) from L-serine and tRNA(Sec): step 1/1. Catalyzes the attachment of serine to tRNA(Ser). Is also able to aminoacylate tRNA(Sec) with serine, to form the misacylated tRNA L-seryl-tRNA(Sec), which will be further converted into selenocysteinyl-tRNA(Sec). This is Serine--tRNA ligase from Xylella fastidiosa (strain M12).